A 1026-amino-acid polypeptide reads, in one-letter code: Retinoblastoma-related protein 1 (1026 aa).

Residues 416–616 (TPVSTAMTTA…EKGSSMYNSL (201 aa)) are domain A. Residues 416-872 (TPVSTAMTTA…NEVFIPSVKP (457 aa)) are pocket. The interval 617 to 737 (AVARPALSVE…PGGGGETCAE (121 aa)) is spacer. Residues 656–680 (PVPSLPKPEPMSAQNGDPRSPKRPC) are disordered. The segment at 738–872 (TGISVFFSKI…NEVFIPSVKP (135 aa)) is domain B. A disordered region spans residues 1007–1026 (QNGSSASSSGAPLKSEQPDS).

Belongs to the retinoblastoma protein (RB) family.

It localises to the nucleus. Its function is as follows. Regulator of biological processes that recruits a histone deacetylase to control gene transcription. May play a role in the entry into mitosis, negatively regulating the cell proliferation. Formation of stable complexes with geminiviridae replication-associated proteins may create a cellular environment which favors viral DNA replication. The protein is Retinoblastoma-related protein 1 (RBR1) of Pisum sativum (Garden pea).